We begin with the raw amino-acid sequence, 665 residues long: DNA ligase (665 aa).

Residues 32 to 36 (DSEYD), 81 to 82 (SL), and E110 each bind NAD(+). K112 functions as the N6-AMP-lysine intermediate in the catalytic mechanism. NAD(+)-binding residues include R133, E167, K283, and K307. Zn(2+)-binding residues include C401, C404, C419, and C424. One can recognise a BRCT domain in the interval 586–665 (EGHPDFSGKT…AAFIEKQNGI (80 aa)).

This sequence belongs to the NAD-dependent DNA ligase family. LigA subfamily. Mg(2+) is required as a cofactor. Requires Mn(2+) as cofactor.

It catalyses the reaction NAD(+) + (deoxyribonucleotide)n-3'-hydroxyl + 5'-phospho-(deoxyribonucleotide)m = (deoxyribonucleotide)n+m + AMP + beta-nicotinamide D-nucleotide.. In terms of biological role, DNA ligase that catalyzes the formation of phosphodiester linkages between 5'-phosphoryl and 3'-hydroxyl groups in double-stranded DNA using NAD as a coenzyme and as the energy source for the reaction. It is essential for DNA replication and repair of damaged DNA. The protein is DNA ligase of Staphylococcus epidermidis (strain ATCC 12228 / FDA PCI 1200).